The primary structure comprises 157 residues: Small ribosomal subunit protein uS7cz/uS7cy (157 aa).

It belongs to the universal ribosomal protein uS7 family. In terms of assembly, part of the 30S ribosomal subunit.

The protein localises to the plastid. It localises to the chloroplast. Its function is as follows. One of the primary rRNA binding proteins, it binds directly to 16S rRNA where it nucleates assembly of the head domain of the 30S subunit. This Gnetum parvifolium (Small-leaved jointfir) protein is Small ribosomal subunit protein uS7cz/uS7cy (rps7-A).